A 58-amino-acid polypeptide reads, in one-letter code: Conotoxin TxXIIIA (58 aa).

The signal sequence occupies residues 1–22 (MRCLPVFVILLLLIASVPSVDA). A propeptide spanning residues 23–46 (ELKAKDDMPQASFHDNAERDQQKK) is cleaved from the precursor.

As to quaternary structure, homodimer; disulfide-linked. Post-translationally, 5 disulfide bonds are present in each homodimer: two intrachain disulfide bonds per subunit, and one interchain disulfide bond linking the two subunits. Expressed by the venom duct.

It is found in the secreted. The protein is Conotoxin TxXIIIA of Conus textile (Cloth-of-gold cone).